Here is a 178-residue protein sequence, read N- to C-terminus: Fatty-acid and retinol-binding protein 1 (178 aa).

The N-terminal stretch at 1-16 (MYHQLILMALIGVIMA) is a signal peptide. Residues Asn-44 and Asn-75 are each glycosylated (N-linked (GlcNAc...) asparagine). Coiled coils occupy residues 67–89 (DAALEALKNTSDKLYQKAVELRN) and 122–154 (QKLDMEKLKQAARDIIAKYEALNEETREELKAT). The N-linked (GlcNAc...) asparagine glycan is linked to Asn-157.

The protein belongs to the fatty-acid and retinol-binding protein (FARBP) family. N-glycosylated.

The protein localises to the secreted. Binds retinol and different fatty acids. The protein is Fatty-acid and retinol-binding protein 1 of Onchocerca dukei (Filarial nematode worm).